The following is a 198-amino-acid chain: Fimbriae W protein (198 aa).

In terms of domain architecture, HTH luxR-type spans 127–192 (HYCTTRHFSV…QFLKYIRVNL (66 aa)).

It is found in the fimbrium. In Salmonella typhimurium (strain LT2 / SGSC1412 / ATCC 700720), this protein is Fimbriae W protein (fimW).